The sequence spans 226 residues: Leucyl/phenylalanyl-tRNA--protein transferase (226 aa).

It belongs to the L/F-transferase family.

Its subcellular location is the cytoplasm. The enzyme catalyses N-terminal L-lysyl-[protein] + L-leucyl-tRNA(Leu) = N-terminal L-leucyl-L-lysyl-[protein] + tRNA(Leu) + H(+). The catalysed reaction is N-terminal L-arginyl-[protein] + L-leucyl-tRNA(Leu) = N-terminal L-leucyl-L-arginyl-[protein] + tRNA(Leu) + H(+). It catalyses the reaction L-phenylalanyl-tRNA(Phe) + an N-terminal L-alpha-aminoacyl-[protein] = an N-terminal L-phenylalanyl-L-alpha-aminoacyl-[protein] + tRNA(Phe). In terms of biological role, functions in the N-end rule pathway of protein degradation where it conjugates Leu, Phe and, less efficiently, Met from aminoacyl-tRNAs to the N-termini of proteins containing an N-terminal arginine or lysine. In Pseudomonas aeruginosa (strain ATCC 15692 / DSM 22644 / CIP 104116 / JCM 14847 / LMG 12228 / 1C / PRS 101 / PAO1), this protein is Leucyl/phenylalanyl-tRNA--protein transferase.